A 236-amino-acid chain; its full sequence is Ribose-5-phosphate isomerase A (236 aa).

Substrate is bound by residues 28 to 31, 83 to 86, and 96 to 99; these read TGST, DGAD, and KGGG. Glu105 serves as the catalytic Proton acceptor. Lys123 provides a ligand contact to substrate.

Belongs to the ribose 5-phosphate isomerase family. In terms of assembly, homodimer.

The enzyme catalyses aldehydo-D-ribose 5-phosphate = D-ribulose 5-phosphate. Its pathway is carbohydrate degradation; pentose phosphate pathway; D-ribose 5-phosphate from D-ribulose 5-phosphate (non-oxidative stage): step 1/1. Functionally, catalyzes the reversible conversion of ribose-5-phosphate to ribulose 5-phosphate. This chain is Ribose-5-phosphate isomerase A, found in Methylorubrum populi (strain ATCC BAA-705 / NCIMB 13946 / BJ001) (Methylobacterium populi).